Here is an 88-residue protein sequence, read N- to C-terminus: KTx type I (88 aa).

The N-terminal stretch at 1–19 (MKTTLVVVVLACIVALTSA) is a signal peptide. A ShKT domain is found at 54-88 (CKDVLSEFSCGVLKKDGQCNKADIQAKCKLTCDKC). Disulfide bonds link Cys54/Cys88, Cys63/Cys81, and Cys72/Cys85.

Belongs to the sea anemone type 1 potassium channel toxin family. As to expression, expressed both outside and in acontia, a specialised envenomation structure laden with batteries of venom-containing nematocysts found only in the superfamily Metridioidea.

The protein localises to the secreted. Its subcellular location is the nematocyst. Its function is as follows. Inhibits voltage-gated potassium channels (Kv1/KCNA). The sequence is that of KTx type I from Calliactis polypus (Hermit crab anemone).